Here is a 362-residue protein sequence, read N- to C-terminus: Putative F-box/kelch-repeat protein At3g20710 (362 aa).

Residues 1 to 50 (MMMSNLPKDLVEEILSRVPFKYLRAIRSTCKNWYDLSKNRSFANKNIDKA) enclose the F-box domain. Kelch repeat units follow at residues 150–201 (YDKS…VSLN) and 293–341 (IYCR…YFKS).

The protein is Putative F-box/kelch-repeat protein At3g20710 of Arabidopsis thaliana (Mouse-ear cress).